The sequence spans 421 residues: Acyl-coenzyme A thioesterase 1 (421 aa).

Residues S232, D326, and H360 each act as charge relay system in the active site.

This sequence belongs to the C/M/P thioester hydrolase family. In terms of assembly, monomer.

Its subcellular location is the cytoplasm. It is found in the cytosol. The catalysed reaction is hexadecanoyl-CoA + H2O = hexadecanoate + CoA + H(+). It catalyses the reaction decanoyl-CoA + H2O = decanoate + CoA + H(+). The enzyme catalyses dodecanoyl-CoA + H2O = dodecanoate + CoA + H(+). It carries out the reaction tetradecanoyl-CoA + H2O = tetradecanoate + CoA + H(+). The catalysed reaction is octadecanoyl-CoA + H2O = octadecanoate + CoA + H(+). It catalyses the reaction eicosanoyl-CoA + H2O = eicosanoate + CoA + H(+). The enzyme catalyses (9Z)-octadecenoyl-CoA + H2O = (9Z)-octadecenoate + CoA + H(+). It carries out the reaction (9Z)-hexadecenoyl-CoA + H2O = (9Z)-hexadecenoate + CoA + H(+). The catalysed reaction is (9E)-octadecenoyl-CoA + H2O = (9E)-octadecenoate + CoA + H(+). Its pathway is lipid metabolism; fatty acid metabolism. Catalyzes the hydrolysis of acyl-CoAs into free fatty acids and coenzyme A (CoASH), regulating their respective intracellular levels. More active towards saturated and unsaturated long chain fatty acyl-CoAs (C12-C20). In Homo sapiens (Human), this protein is Acyl-coenzyme A thioesterase 1 (ACOT1).